Here is a 65-residue protein sequence, read N- to C-terminus: Toxin Cbo5 (65 aa).

The LCN-type CS-alpha/beta domain occupies 2 to 65; the sequence is KDGYLVDKTG…QTWPLPNKSC (64 aa). Cystine bridges form between Cys12–Cys65, Cys16–Cys41, Cys25–Cys46, and Cys29–Cys48.

This sequence belongs to the long (4 C-C) scorpion toxin superfamily. Sodium channel inhibitor family. Beta subfamily. In terms of tissue distribution, expressed by the venom gland.

The protein localises to the secreted. Functionally, a probable toxin that has no activity on the tested sodium channels (when tested at 200 nM) and is not toxic to mice, crickets or sweet water shrimps. It resembles Beta toxins that bind voltage-independently at site-4 of sodium channels and shift the voltage of activation toward more negative potentials, thereby affecting sodium channel activation and promoting spontaneous and repetitive firing. The protein is Toxin Cbo5 of Centruroides bonito (Scorpion).